The primary structure comprises 529 residues: Beta-galactoside alpha-2,6-sialyltransferase 2 (529 aa).

Residues 1–11 (MKPHLKQWRQR) lie on the Cytoplasmic side of the membrane. The chain crosses the membrane as a helical; Signal-anchor for type II membrane protein span at residues 12–32 (MLFGLFAGGLLFLLIFIYFTD). Residues 33–529 (SNPAEPVPSS…PAPSPVIPHS (497 aa)) are Lumenal-facing. The segment at 142–186 (SHSQGTLGFPSPGEPGPREGAFPAAQVQRRRVKKRHRRQRRSHVL) is disordered. A compositionally biased stretch (basic residues) spans 169-183 (QRRRVKKRHRRQRRS). Residue asparagine 211 is glycosylated (N-linked (GlcNAc...) asparagine). Cystine bridges form between cysteine 253/cysteine 519, cysteine 296/cysteine 448, and cysteine 466/cysteine 477.

The protein belongs to the glycosyltransferase 29 family.

It localises to the golgi apparatus. The protein resides in the golgi stack membrane. The enzyme catalyses a beta-D-galactoside + CMP-N-acetyl-beta-neuraminate = an N-acetyl-alpha-neuraminyl-(2-&gt;6)-beta-D-galactosyl derivative + CMP + H(+). Transfers sialic acid from the donor of substrate CMP-sialic acid to galactose containing acceptor substrates. Has alpha-2,6-sialyltransferase activity toward oligosaccharides that have the Gal-beta-1,4-GlcNAc sequence at the non-reducing end of their carbohydrate groups, but it has weak or no activities toward glycoproteins and glycolipids. This chain is Beta-galactoside alpha-2,6-sialyltransferase 2 (ST6GAL2), found in Pan troglodytes (Chimpanzee).